A 209-amino-acid polypeptide reads, in one-letter code: Ribosome maturation factor RimM (209 aa).

One can recognise a PRC barrel domain in the interval Glu103 to Met178. The segment at Pro184 to Arg209 is disordered. Residues Lys187–Arg209 show a composition bias toward basic and acidic residues.

It belongs to the RimM family. As to quaternary structure, binds ribosomal protein uS19.

The protein localises to the cytoplasm. An accessory protein needed during the final step in the assembly of 30S ribosomal subunit, possibly for assembly of the head region. Essential for efficient processing of 16S rRNA. May be needed both before and after RbfA during the maturation of 16S rRNA. It has affinity for free ribosomal 30S subunits but not for 70S ribosomes. This Koribacter versatilis (strain Ellin345) protein is Ribosome maturation factor RimM.